Here is a 244-residue protein sequence, read N- to C-terminus: Sperm-egg fusion protein Juno (244 aa).

An N-terminal signal peptide occupies residues 1–19; sequence MAQWWQILLGLWAVLPTLA. Disulfide bonds link cysteine 27–cysteine 55, cysteine 47–cysteine 95, cysteine 56–cysteine 99, cysteine 79–cysteine 166, cysteine 86–cysteine 137, cysteine 126–cysteine 200, cysteine 130–cysteine 180, and cysteine 143–cysteine 160. Positions 62–81 are important for interaction with IZUMO1; sequence WEAHLEEPLLFNFSMMHCGL. An N-linked (GlcNAc...) asparagine glycan is attached at asparagine 73. Asparagine 185 is a glycosylation site (N-linked (GlcNAc...) asparagine). The GPI-anchor amidated glycine moiety is linked to residue glycine 222. Positions 223–244 are excised as a propeptide; it reads SALAPQLSYTLPAFSLCLLFHP.

The protein belongs to the folate receptor family. As to quaternary structure, monomer. Interacts with IZUMO1; the interaction is direct. IZUMO1 and IZUMO1R/JUNO form a complex with 1:1 stoichiometry. Interacts with WDR54. The protein is rapidly cleaved following fertilization, being only weakly detectable in zona-intact fertilized eggs at telophase II and undetectable at the pronuclear stage. Sheding is probably required to block to polyspermy and ensuring egg fusion with a single sperm. Widely expressed with higher expression in thymus, spleen and lung. Present at the cell surface of unfertilized oocytes, while it is barely detectable 30 to 40 minutes after fertilization (at protein level).

Its subcellular location is the cell membrane. Receptor for IZUMO1 present at the cell surface of oocytes (oolemma), which is essential for species-specific gamete recognition and fertilization. The IZUMO1:IZUMO1R/JUNO interaction is a necessary adhesion event between sperm and egg that is required for fertilization but is not sufficient for cell fusion. The ligand-receptor interaction probably does not act as a membrane 'fusogen'. Does not bind folate. This is Sperm-egg fusion protein Juno from Mus musculus (Mouse).